A 96-amino-acid chain; its full sequence is Auxin-responsive protein SAUR29 (96 aa).

This sequence belongs to the ARG7 family.

The protein localises to the cell membrane. Functionally, functions as a positive effector of cell expansion through modulation of auxin transport. Involved in thermo-responsiveness of plant architecture. Enhances plasma membrane H(+)-ATPase. The protein is Auxin-responsive protein SAUR29 of Arabidopsis thaliana (Mouse-ear cress).